Consider the following 471-residue polypeptide: MAAPGTPPPSASGGGGGEPRQLPELIRLKRDGGHLREADIRNFVHAVIDGRAQDTQIGAMLMAIRLQGMNLEETSVLTRALAESGQQLEWPKAWHQQLVDKHSTGGVGDKVSLVLAPALAACGCKVPMISGRSLGHTGGTLDKLESIPGFGVTQSPEQMLHILEEVGCCIVGQSAKLVPADGILYAARDVTATVDSVPLITASILSKKAVEGLSTLVVDVKFGGAAVFPDQEKARELAKMLVRVGVSLGLKVAAALTAMDNPLGRSVGHTLEVEEALLCLDGAGPPDLRDLVIRLGGAILWISGQAETQDQGAARVAAALDDGSARRRFQLMLSAQGVDPGLAKALCSGSPTQRRQLLPHAREQEELLAPADGIVECVRALPLARVLHDLGAGRSRAGQPIRPGVGAEVLVDVGQCLSRGTPWLRVHLDGPALSSQQRRTLQGALVLSDRAPFKVPSPFAELVLPPTIAQP.

Pro residues predominate over residues 1 to 10 (MAAPGTPPPS). The segment at 1-21 (MAAPGTPPPSASGGGGGEPRQ) is disordered. Position 6 is a phosphothreonine (threonine 6). The substrate site is built by histidine 102, arginine 188, serine 203, and lysine 207.

It belongs to the thymidine/pyrimidine-nucleoside phosphorylase family. Homodimer.

It carries out the reaction thymidine + phosphate = 2-deoxy-alpha-D-ribose 1-phosphate + thymine. It participates in pyrimidine metabolism; dTMP biosynthesis via salvage pathway; dTMP from thymine: step 1/2. Catalyzes the reversible phosphorolysis of thymidine. The produced molecules are then utilized as carbon and energy sources or in the rescue of pyrimidine bases for nucleotide synthesis. In Mus musculus (Mouse), this protein is Thymidine phosphorylase (Tymp).